We begin with the raw amino-acid sequence, 1059 residues long: Ubiquitin carboxyl-terminal hydrolase 36 (1059 aa).

2 disordered regions span residues 22-45 and 102-145; these read LGGN…NGSL and GKLV…KPKR. Positions 23 to 45 are enriched in polar residues; sequence GGNSSAGSSTDQAKSGEDTNGSL. A compositionally biased stretch (low complexity) spans 121 to 138; that stretch reads HPNNQSHHNHPHPTSNPN. A USP domain is found at 168–457; the sequence is TGMINVGNTC…NAYIMFFELD (290 aa). Cys-177 acts as the Nucleophile in catalysis. His-416 acts as the Proton acceptor in catalysis. Disordered stretches follow at residues 464-512, 554-853, 941-1005, and 1022-1059; these read PPAN…YTNG, ATSA…VTSN, RQRD…FYNQ, and FGGA…QQQT. Composition is skewed to low complexity over residues 479–494 and 561–580; these read STTP…PSPT and NGNK…KSIN. Residues Ser-490 and Ser-492 each carry the phosphoserine modification. Positions 603–615 are enriched in polar residues; the sequence is TTAQLPSMPNMTE. Residues Thr-632 and Thr-636 each carry the phosphothreonine modification. Phosphoserine is present on residues Ser-646 and Ser-648. The segment covering 673-702 has biased composition (polar residues); that stretch reads ESGQTNGHSKTNGSLTNGSASSSVHVNNSK. A compositionally biased stretch (basic and acidic residues) spans 703–720; sequence QKTDAIDEIFKSLKKSAD. Ser-721 is subject to Phosphoserine. Acidic residues predominate over residues 721 to 730; sequence SEEDDDEEEP. A compositionally biased stretch (low complexity) spans 740–750; that stretch reads PQKQSQSQSKA. Residues 751-760 show a composition bias toward pro residues; the sequence is PPSPKTPPSP. Ser-753 carries the phosphoserine modification. The residue at position 756 (Thr-756) is a Phosphothreonine. Ser-759 is subject to Phosphoserine. Over residues 779-788 the composition is skewed to acidic residues; it reads DAIDDDDDAV. Residue Thr-799 is modified to Phosphothreonine. Residues 806–818 are compositionally biased toward polar residues; the sequence is NPFSSSKPSTDSP. Residue Ser-817 is modified to Phosphoserine. Thr-820 bears the Phosphothreonine mark. A compositionally biased stretch (polar residues) spans 833-853; sequence ALKSHQQPRVGNGYQSNVTSN. A compositionally biased stretch (low complexity) spans 963–974; it reads SGSAKGNNASNS.

This sequence belongs to the peptidase C19 family. As to quaternary structure, interacts with atms/PAF1, but not with CycT.

The protein resides in the nucleus. It localises to the nucleolus. The enzyme catalyses Thiol-dependent hydrolysis of ester, thioester, amide, peptide and isopeptide bonds formed by the C-terminal Gly of ubiquitin (a 76-residue protein attached to proteins as an intracellular targeting signal).. Its function is as follows. Required for maintaining multiple types of adult stem cells, including male and female germline, epithelial follicle cell and intestinal stem cells. May function as a transcriptional repressor by continually deubiquiting histone H2B at the promoters of genes critical for cellular differentiation, thereby preventing histone H3 'Lys-4' trimethylation (H3K4). Controls selective autophagy activation by ubiquitinated proteins. The polypeptide is Ubiquitin carboxyl-terminal hydrolase 36 (Usp36) (Drosophila sechellia (Fruit fly)).